A 182-amino-acid polypeptide reads, in one-letter code: Oligoribonuclease (182 aa).

One can recognise an Exonuclease domain in the interval Leu-8 to Leu-171. The active site involves Tyr-129.

The protein belongs to the oligoribonuclease family.

Its subcellular location is the cytoplasm. Its function is as follows. 3'-to-5' exoribonuclease specific for small oligoribonucleotides. The sequence is that of Oligoribonuclease (orn) from Haemophilus influenzae (strain ATCC 51907 / DSM 11121 / KW20 / Rd).